A 355-amino-acid chain; its full sequence is Peptide chain release factor 1 (355 aa).

Residue Gln-233 is modified to N5-methylglutamine. Basic and acidic residues predominate over residues 280-293 (ERRKKEQERADSRR). The disordered stretch occupies residues 280-308 (ERRKKEQERADSRRGQVGSGDRSERIRTY).

Belongs to the prokaryotic/mitochondrial release factor family. Post-translationally, methylated by PrmC. Methylation increases the termination efficiency of RF1.

The protein localises to the cytoplasm. Functionally, peptide chain release factor 1 directs the termination of translation in response to the peptide chain termination codons UAG and UAA. This Rickettsia peacockii (strain Rustic) protein is Peptide chain release factor 1.